A 64-amino-acid chain; its full sequence is Large ribosomal subunit protein bL35 (64 aa).

The interval M1–N28 is disordered.

The protein belongs to the bacterial ribosomal protein bL35 family.

The sequence is that of Large ribosomal subunit protein bL35 from Renibacterium salmoninarum (strain ATCC 33209 / DSM 20767 / JCM 11484 / NBRC 15589 / NCIMB 2235).